Consider the following 256-residue polypeptide: Thiazole synthase (256 aa).

K95 acts as the Schiff-base intermediate with DXP in catalysis. 1-deoxy-D-xylulose 5-phosphate is bound by residues G156, 182–183 (AG), and 204–205 (NT).

Belongs to the ThiG family. In terms of assembly, homotetramer. Forms heterodimers with either ThiH or ThiS.

Its subcellular location is the cytoplasm. The enzyme catalyses [ThiS sulfur-carrier protein]-C-terminal-Gly-aminoethanethioate + 2-iminoacetate + 1-deoxy-D-xylulose 5-phosphate = [ThiS sulfur-carrier protein]-C-terminal Gly-Gly + 2-[(2R,5Z)-2-carboxy-4-methylthiazol-5(2H)-ylidene]ethyl phosphate + 2 H2O + H(+). It functions in the pathway cofactor biosynthesis; thiamine diphosphate biosynthesis. Its function is as follows. Catalyzes the rearrangement of 1-deoxy-D-xylulose 5-phosphate (DXP) to produce the thiazole phosphate moiety of thiamine. Sulfur is provided by the thiocarboxylate moiety of the carrier protein ThiS. In vitro, sulfur can be provided by H(2)S. This chain is Thiazole synthase, found in Klebsiella pneumoniae (strain 342).